A 100-amino-acid chain; its full sequence is Large ribosomal subunit protein uL23 (100 aa).

It belongs to the universal ribosomal protein uL23 family. In terms of assembly, part of the 50S ribosomal subunit. Contacts protein L29, and trigger factor when it is bound to the ribosome.

Functionally, one of the early assembly proteins it binds 23S rRNA. One of the proteins that surrounds the polypeptide exit tunnel on the outside of the ribosome. Forms the main docking site for trigger factor binding to the ribosome. The protein is Large ribosomal subunit protein uL23 of Prochlorococcus marinus (strain MIT 9301).